The chain runs to 113 residues: Nascent polypeptide-associated complex protein (113 aa).

Positions G5 to I73 constitute an NAC-A/B domain.

The protein belongs to the NAC-alpha family. Homodimer. Interacts with the ribosome. Binds ribosomal RNA.

Its function is as follows. Contacts the emerging nascent chain on the ribosome. The polypeptide is Nascent polypeptide-associated complex protein (Methanosarcina acetivorans (strain ATCC 35395 / DSM 2834 / JCM 12185 / C2A)).